Here is a 487-residue protein sequence, read N- to C-terminus: N-succinylglutamate 5-semialdehyde dehydrogenase (487 aa).

Gly221–Gly226 serves as a coordination point for NAD(+). Residues Glu244 and Cys278 contribute to the active site.

The protein belongs to the aldehyde dehydrogenase family. AstD subfamily.

The catalysed reaction is N-succinyl-L-glutamate 5-semialdehyde + NAD(+) + H2O = N-succinyl-L-glutamate + NADH + 2 H(+). Its pathway is amino-acid degradation; L-arginine degradation via AST pathway; L-glutamate and succinate from L-arginine: step 4/5. Functionally, catalyzes the NAD-dependent reduction of succinylglutamate semialdehyde into succinylglutamate. This chain is N-succinylglutamate 5-semialdehyde dehydrogenase, found in Pseudomonas entomophila (strain L48).